Here is a 332-residue protein sequence, read N- to C-terminus: Adenine deaminase (332 aa).

3 residues coordinate Zn(2+): H14, H16, and H194. E197 acts as the Proton donor in catalysis. A Zn(2+)-binding site is contributed by D275. D276 provides a ligand contact to substrate.

The protein belongs to the metallo-dependent hydrolases superfamily. Adenosine and AMP deaminases family. Adenine deaminase type 2 subfamily. Requires Zn(2+) as cofactor.

It carries out the reaction adenine + H2O + H(+) = hypoxanthine + NH4(+). Functionally, catalyzes the hydrolytic deamination of adenine to hypoxanthine. Plays an important role in the purine salvage pathway and in nitrogen catabolism. The sequence is that of Adenine deaminase from Psychrobacter cryohalolentis (strain ATCC BAA-1226 / DSM 17306 / VKM B-2378 / K5).